The sequence spans 282 residues: Fibrinogen-like protein A (282 aa).

The signal sequence occupies residues 1-24; the sequence is MFSFIMKAAILLILVGCISFCISS. Positions 61–281 constitute a Fibrinogen C-terminal domain; the sequence is SHSPEYPRDC…FAEMKLRNRS (221 aa). Intrachain disulfides connect cysteine 70–cysteine 101 and cysteine 224–cysteine 240.

The chain is Fibrinogen-like protein A from Apostichopus parvimensis (Warty sea cucumber).